A 79-amino-acid polypeptide reads, in one-letter code: Small ribosomal subunit protein bS18 (79 aa).

Belongs to the bacterial ribosomal protein bS18 family. Part of the 30S ribosomal subunit. Forms a tight heterodimer with protein bS6.

Binds as a heterodimer with protein bS6 to the central domain of the 16S rRNA, where it helps stabilize the platform of the 30S subunit. The polypeptide is Small ribosomal subunit protein bS18 (Streptococcus pyogenes serotype M5 (strain Manfredo)).